A 246-amino-acid chain; its full sequence is Bromelain inhibitor (246 aa).

A signal peptide spans 1-19; the sequence is MNMLLLFLHEVINGERVTL. 5 cysteine pairs are disulfide-bonded: cysteine 22–cysteine 42, cysteine 25–cysteine 74, cysteine 27–cysteine 40, cysteine 49–cysteine 56, and cysteine 53–cysteine 65. The propeptide occupies 31–35; that stretch reads TSSSD. Propeptides lie at residues 77–95 and 107–111; these read PVSS…RVTL and TSSSD. Disulfide bonds link cysteine 98/cysteine 118, cysteine 101/cysteine 150, cysteine 103/cysteine 116, cysteine 125/cysteine 132, and cysteine 129/cysteine 141. Propeptides lie at residues 153–171 and 183–187; these read PVSS…RVTL and TSSSD. Cystine bridges form between cysteine 174/cysteine 194, cysteine 177/cysteine 226, cysteine 179/cysteine 192, cysteine 201/cysteine 208, and cysteine 205/cysteine 217. A propeptide spanning residues 229–246 is cleaved from the precursor; that stretch reads PVSSWEARQKIKLLQGRE.

Belongs to the protease inhibitor I67 family. In terms of assembly, each inhibitor is composed of two chains, designated A and B linked by three disulfide bonds.

Its function is as follows. Weak inhibitor of cysteine proteinases. The chain is Bromelain inhibitor from Ananas comosus (Pineapple).